Consider the following 290-residue polypeptide: Ribosomal large subunit pseudouridine synthase B (290 aa).

In terms of domain architecture, S4 RNA-binding spans 3–75 (EKLQKVLARA…ICRVLAYYKP (73 aa)). The active-site Nucleophile is the aspartate 110. The tract at residues 251 to 290 (SSKVAVEKDRRRMKANQIRRAVKRHSQVSGSRRSGGRNNG) is disordered.

This sequence belongs to the pseudouridine synthase RsuA family.

It catalyses the reaction uridine(2605) in 23S rRNA = pseudouridine(2605) in 23S rRNA. Responsible for synthesis of pseudouridine from uracil-2605 in 23S ribosomal RNA. In Shigella flexneri, this protein is Ribosomal large subunit pseudouridine synthase B (rluB).